A 36-amino-acid polypeptide reads, in one-letter code: U14-myrmicitoxin-Tb1a (36 aa).

Residues 1 to 23 form the signal peptide; it reads MKIIKLITIFTMMATLMXXVANG. A propeptide spanning residues 24-25 is cleaved from the precursor; that stretch reads EP. Gln-35 carries the glutamine amide modification.

As to expression, expressed by the venom gland.

It localises to the secreted. In terms of biological role, venom protein with unknown function. Does not induce paralysis when a high dose is administered by intrathoracic injection into the blowfly Lucilia caesar. In Tetramorium bicarinatum (Tramp ant), this protein is U14-myrmicitoxin-Tb1a.